A 155-amino-acid chain; its full sequence is IFN signaling evasion protein OPG029 (155 aa).

It belongs to the orthopoxvirus OPG029 family. As to quaternary structure, interacts with host TANK, TBKBP1 and AZI2; these interactions prevent interferon production. Interacts with host STAT2.

Its function is as follows. Prevents establishment of cellular antiviral state by blocking virus-induced phosphorylation and activation of interferon regulatory factors 3/IRF3 and 7/IRF7, transcription factors critical for the induction of interferons alpha and beta. This blockage is produced through the inhibition of host TBK1, by binding host TBK1 adapter proteins TBKBP1 and AZI2, thereby producing a strong inhibition of the phosphorylation and activation of IRF3 and IRF7. Also acts as an inhibitor of the cellular response to type I IFN by interacting with host STAT2. Mechanistically, exerts its inhibitory effect after host ISGF3 complex (composed of STAT1, STAT2 and IRF9) binding to the interferon stimulated response element (ISRE). The protein is IFN signaling evasion protein OPG029 (OPG019) of Cynomys gunnisoni (Gunnison's prairie dog).